A 422-amino-acid polypeptide reads, in one-letter code: Phytoene synthase 1, chloroplastic (422 aa).

The N-terminal 70 residues, 1–70 (MSSSVAVLWV…NRSRRIGVVS (70 aa)), are a transit peptide targeting the chloroplast.

The protein belongs to the phytoene/squalene synthase family. As to quaternary structure, monomer. Interacts with OR. Interacts with ORLIKE.

Its subcellular location is the plastid. It is found in the chloroplast membrane. The catalysed reaction is 2 (2E,6E,10E)-geranylgeranyl diphosphate = 15-cis-phytoene + 2 diphosphate. The protein operates within carotenoid biosynthesis; phytoene biosynthesis; all-trans-phytoene from geranylgeranyl diphosphate: step 1/1. Its function is as follows. Catalyzes the reaction from prephytoene diphosphate to phytoene. The chain is Phytoene synthase 1, chloroplastic from Arabidopsis thaliana (Mouse-ear cress).